Here is a 378-residue protein sequence, read N- to C-terminus: Polar flagellin B/D (378 aa).

Coiled-coil stretches lie at residues 103-128 (SNSK…RIAE) and 311-340 (AFQN…IKDT).

Belongs to the bacterial flagellin family. In terms of assembly, heteromer of multiple flagellin subunits including FlaA, FlaB/D, FlaC, FlaE and FlaF.

It is found in the secreted. The protein resides in the bacterial flagellum. Its function is as follows. Flagellin is the subunit protein which polymerizes to form the filaments of bacterial flagella. FlaB/D is not essential for polar flagellar synthesis and swimming motility. Homomer of FlaB/D is not able to form a functional filament. In Vibrio parahaemolyticus serotype O3:K6 (strain RIMD 2210633), this protein is Polar flagellin B/D (flaB).